We begin with the raw amino-acid sequence, 1434 residues long: Pleiotropic drug resistance protein 1 (1434 aa).

The interval 1 to 22 (MEPANLSNLRGSSLRGSTRGSL) is disordered. In terms of domain architecture, ABC transporter 1 spans 161–434 (LNSLHILSSR…FESMGFKCPQ (274 aa)). 194 to 201 (GPPSSGKT) is an ATP binding site. The ABC transmembrane type-2 1 domain maps to 512–725 (ELLKVCTERE…SVNSILVNEF (214 aa)). The next 7 helical transmembrane spans lie at 530 to 550 (FVYM…MTLF), 563 to 583 (GGIY…NGMS), 618 to 638 (IPVT…VIGF), 649 to 669 (FLLL…IGAV), 675 to 695 (VAST…GFVL), 702 to 722 (SWWI…SILV), and 760 to 780 (IGVG…SLAL). The tract at residues 793 to 824 (LPEDGENAENGEVSSQITSTDGGDSISESQNN) is disordered. A compositionally biased stretch (polar residues) spans 804–824 (EVSSQITSTDGGDSISESQNN). The 253-residue stretch at 837–1089 (ITFDDVVYSV…HLIKYFESNP (253 aa)) folds into the ABC transporter 2 domain. 882–889 (GVSGAGKT) lines the ATP pocket. The region spanning 1162–1376 (TQCVACLWKQ…TLYGLVASQF (215 aa)) is the ABC transmembrane type-2 2 domain. Helical transmembrane passes span 1181–1201 (YTAV…TMFW), 1221–1241 (YAAV…VVAI), 1269–1289 (IPYI…MIGF), 1296–1316 (FFWY…YGMM), 1326–1346 (VASI…GFII), 1357–1377 (WYYW…SQFG), and 1406–1426 (VVAA…AFAI).

Belongs to the ABC transporter superfamily. ABCG family. PDR (TC 3.A.1.205) subfamily.

The protein localises to the membrane. Functionally, may be a general defense protein. The polypeptide is Pleiotropic drug resistance protein 1 (PDR1) (Nicotiana tabacum (Common tobacco)).